The chain runs to 456 residues: MKKHTGTIISISGFVLKIEFNESDLPEISHALEYKTHQGTYLAEVVQHTGINTVSAIAIGEVSGLARGTEVVNLGHPIEVPVGESVQGRMLNVYGKAIDGKPEPEAEVKWPIFREQPLLRDLDTSKEILYTGIKVIDLICPILKGGKTGLFGGAGVGKSVLMQELINNISMMGGNSVFTGVGERVREGIGLYKELEASGVLSQTTVVLGQMNESPGVRMRVALTGLTIAEYLRDEEKKDVLLFIDNVFRFIQAGSEVSSLQGKIPITGGYQSTLSKEVGDFQDRIASTKDGSITSIQCVFLPADDIDDPSAVATFSHLDSTIVLERSIAALGIFPAVNPLQSFSRALNPNFVGERHYQLAVQVKYVLQRYTELQEIINVLGMAELSDDDKNLVHRARKIRNFLSQPFYVSEKFTGTEGIFVEMEDLLESIERILDGTYDDRSERDFLFIGSYKDLK.

Residue 152 to 159 (GGAGVGKS) coordinates ATP.

Belongs to the ATPase alpha/beta chains family. In terms of assembly, F-type ATPases have 2 components, CF(1) - the catalytic core - and CF(0) - the membrane proton channel. CF(1) has five subunits: alpha(3), beta(3), gamma(1), delta(1), epsilon(1). CF(0) has three main subunits: a(1), b(2) and c(9-12). The alpha and beta chains form an alternating ring which encloses part of the gamma chain. CF(1) is attached to CF(0) by a central stalk formed by the gamma and epsilon chains, while a peripheral stalk is formed by the delta and b chains.

It localises to the cell membrane. It carries out the reaction ATP + H2O + 4 H(+)(in) = ADP + phosphate + 5 H(+)(out). In terms of biological role, produces ATP from ADP in the presence of a proton gradient across the membrane. The catalytic sites are hosted primarily by the beta subunits. This chain is ATP synthase subunit beta 1, found in Listeria welshimeri serovar 6b (strain ATCC 35897 / DSM 20650 / CCUG 15529 / CIP 8149 / NCTC 11857 / SLCC 5334 / V8).